We begin with the raw amino-acid sequence, 1222 residues long: MESRGCAALWVLLLAQVSEQQTPACALGLAAAASGSPEDPQPPPFSGSSWLETGEYDLVSAYEVDHRGDYVSHDIMHYQRRRRRRAVTQPGGDALHLRLKGPRHDLHLDLKAASNLMAPGFMVQTLGKGGTKSVQMFPPEENCFYQGSLRSQGNSSVALSTCQGLLGMIRTKDTDYFLKPLPPHLTSKLNRSAQGDSPSHVLYKRSTERQAPRENEVLMITRKRDLARPHLHHDNFHLGPSQKQHFCGRRKKYMPQPPNDDLYILPDEYKPSSRHKRSLLKSHRNEELNVETLVVVDRKMMQSHGHENITTYVLTILNMVSALFKDGTIGGNINIVIVGLILLEDEQPGLAISHHADHTLTSFCQWQSGLMGKDGTRHDHAILLTGLDICSWKNEPCDTLGFAPISGMCSKYRSCTVNEDSGLGLAFTIAHESGHNFGMVHDGEGNMCKKSEGNIMSPTLAGRNGVFSWSSCSRQYLHKFLSTAQAICLADQPKPVKEYKYPEKLPGQLYDANTQCKWQFGEKAKLCMLDFRKDICKALWCHRIGRKCETKFMPAAEGTLCGQDMWCRGGQCVKYGDEGPKPTHGHWSDWSPWSPCSRTCGGGISHRDRLCTNPRPSHGGKFCQGSTRTLKLCNSQRCPLDSVDFRAAQCAEYNSKRFRGWLYKWKPYTQLEDQDLCKLYCIAEGFDFFFSLSNKVKDGTPCSEDSRNVCIDGMCERVGCDNVLGSDATEDSCGVCKGNNSDCVTHRGLYSKHHSTNQYYHMVTIPSGARSIHIYETNISTSYISVRNSLKRYYLNGHWSVDWPGRYKFSGATFNYKRSYKEPENLTSPGPTNETLIVELLFQGRNPGVAWEFSLPRSGAKKTPAAQPSYSWAIVRSECSVSCGGGKMNSKAGCYRDLKVPVNASFCNPKTRPVTGLVPCKVSPCPSSWSVGNWSVCSRTCGGGTQSRPVRCTRRAHYRDESIPASLCPQPEPPIHQACNSQSCPPAWSTGPWAECSRTCGKGWRKRTVACKSTNPSARAQLLHDTACTSEPKPRTHEICLLKRCHKHKKLQWLVSAWSQCSVTCQGGTQQRVLRCAEKYISGKYRELASKKCLHLPKPDLELERACGLIPCPKHPPFDASGSPRGSWFASPWSQCTASCGGGVQRRTVQCLLRGQPASDCFLHEKPETSSACNTHFCPIAEKRGTFCKDLFHWCYLVPQHGMCGHRFYSKQCCNTCSKSNL.

The N-terminal stretch at M1 to Q20 is a signal peptide. A propeptide spanning residues Q21–R277 is cleaved from the precursor. N-linked (GlcNAc...) asparagine glycans are attached at residues N154 and N190. The short motif at H245 to Y253 is the Cysteine switch element. C247 contributes to the Zn(2+) binding site. A Peptidase M12B domain is found at L288 to P493. The N-linked (GlcNAc...) asparagine glycan is linked to N308. 11 disulfides stabilise this stretch: C364–C415, C390–C397, C409–C488, C448–C472, C516–C541, C527–C548, C536–C567, C561–C572, C596–C633, C600–C638, and C611–C623. H431 provides a ligand contact to Zn(2+). The active site involves E432. The Zn(2+) site is built by H435 and H441. One can recognise a Disintegrin domain in the interval K494–T583. In terms of domain architecture, TSP type-1 1 spans H584–P639. 6 N-linked (GlcNAc...) asparagine glycosylation sites follow: N739, N778, N825, N833, N903, and N933. The interval T745–S871 is spacer. 5 consecutive TSP type-1 domains span residues W872–C920, C925–P985, P986–H1046, K1049–P1113, and R1125–P1179. A PLAC domain is found at R1184–N1221.

Zn(2+) is required as a cofactor. Post-translationally, the precursor is cleaved by a furin endopeptidase. Glycosylated. Can be O-fucosylated by POFUT2 on a serine or a threonine residue found within the consensus sequence C1-X(2)-(S/T)-C2-G of the TSP type-1 repeat domains where C1 and C2 are the first and second cysteine residue of the repeat, respectively. Fucosylated repeats can then be further glycosylated by the addition of a beta-1,3-glucose residue by the glucosyltransferase, B3GALTL. Fucosylation mediates the efficient secretion of ADAMTS family members. Can also be C-glycosylated with one or two mannose molecules on tryptophan residues within the consensus sequence W-X-X-W of the TPRs, and N-glycosylated. These other glycosylations can also facilitate secretion.

It is found in the secreted. Its subcellular location is the extracellular space. It localises to the extracellular matrix. The polypeptide is A disintegrin and metalloproteinase with thrombospondin motifs 16 (Adamts16) (Mus musculus (Mouse)).